The primary structure comprises 289 residues: Probable porphobilinogen deaminase (289 aa).

C234 is modified (S-(dipyrrolylmethanemethyl)cysteine).

The protein belongs to the HMBS family. Dipyrromethane serves as cofactor.

The enzyme catalyses 4 porphobilinogen + H2O = hydroxymethylbilane + 4 NH4(+). It participates in porphyrin-containing compound metabolism; protoporphyrin-IX biosynthesis; coproporphyrinogen-III from 5-aminolevulinate: step 2/4. Functionally, tetrapolymerization of the monopyrrole PBG into the hydroxymethylbilane pre-uroporphyrinogen in several discrete steps. The chain is Probable porphobilinogen deaminase (hemC) from Archaeoglobus fulgidus (strain ATCC 49558 / DSM 4304 / JCM 9628 / NBRC 100126 / VC-16).